Here is a 288-residue protein sequence, read N- to C-terminus: Mortality factor 4-like protein 2 (288 aa).

Residues 1 to 15 (MSSRKQGSQPRGQQS) are compositionally biased toward polar residues. A disordered region spans residues 1–113 (MSSRKQGSQP…RADPTVESEE (113 aa)). Residue serine 71 is modified to Phosphoserine. The region spanning 117–288 (NRMEVKVKIP…ASAEYHRKAL (172 aa)) is the MRG domain.

In terms of assembly, component of the NuA4 histone acetyltransferase complex which contains the catalytic subunit KAT5/TIP60 and the subunits EP400, TRRAP/PAF400, BRD8/SMAP, EPC1, DMAP1/DNMAP1, RUVBL1/TIP49, RUVBL2, ING3, actin, ACTL6A/BAF53A, MORF4L1/MRG15, MORF4L2/MRGX, MRGBP, YEATS4/GAS41 and VPS72/YL1. The NuA4 complex interacts with MYC and the adenovirus E1A protein. MORF4L1 may also participate in the formation of NuA4 related complexes which lack the KAT5/TIP60 catalytic subunit, but which include the SWI/SNF related protein SRCAP. Component of the MSIN3A histone deacetylase complex, which includes SIN3A, HDAC2, ARID4B, MORF4L1, RBBP4/RbAp48, and RBBP7/RbAp46. Interacts with MRFAP1 and RB1. May also interact with one or more as yet undefined members of the TLE (transducin-like enhancer of split) family of transcriptional repressors.

Its subcellular location is the nucleus. Its function is as follows. Component of the NuA4 histone acetyltransferase complex which is involved in transcriptional activation of select genes principally by acetylation of nucleosomal histone H4 and H2A. This modification may both alter nucleosome - DNA interactions and promote interaction of the modified histones with other proteins which positively regulate transcription. This complex may be required for the activation of transcriptional programs associated with oncogene and proto-oncogene mediated growth induction, tumor suppressor mediated growth arrest and replicative senescence, apoptosis, and DNA repair. The NuA4 complex ATPase and helicase activities seem to be, at least in part, contributed by the association of RUVBL1 and RUVBL2 with EP400. NuA4 may also play a direct role in DNA repair when directly recruited to sites of DNA damage. Also a component of the MSIN3A complex which acts to repress transcription by deacetylation of nucleosomal histones. The polypeptide is Mortality factor 4-like protein 2 (MORF4L2) (Macaca fascicularis (Crab-eating macaque)).